The chain runs to 634 residues: Transmembrane and coiled-coil domain-containing protein 4 (634 aa).

Positions 150–190 form a coiled coil; that stretch reads EELDVLEEMFLESLKEIKEEESEMAEASRKKKENRRKWKRY. Helical transmembrane passes span 203–223, 231–251, and 346–366; these read VIGVTGGLAAPLVAAGAATII, LGSAAGIAIMTSLFGAAGAGL, and LSGIVAALTWPASLLSVANVI. The interval 542-612 is disordered; that stretch reads EPRQAAAAAS…ERPPICSHGM (71 aa). Residues 552–583 show a composition bias toward polar residues; sequence SGETPHQVGQTQGPISGDTSKLAMSTDPSQAQ.

This sequence belongs to the TMCO4 family.

The protein localises to the membrane. The protein is Transmembrane and coiled-coil domain-containing protein 4 (TMCO4) of Homo sapiens (Human).